A 580-amino-acid chain; its full sequence is E3 ubiquitin-protein ligase TRIM45 (580 aa).

The RING-type zinc-finger motif lies at 29 to 98; that stretch reads CPLCLGLFKA…QIGILCPVCD (70 aa). B box-type zinc fingers lie at residues 130–176 and 186–227; these read GQGL…MVDL and GKPI…CDFT. Zn(2+) contacts are provided by cysteine 135, cysteine 138, cysteine 158, histidine 162, cysteine 191, histidine 194, cysteine 214, and histidine 219. A coiled-coil region spans residues 281–335; it reads SEGYIKAIEEHRDKLLKQLEDIRAQKENSLQLQKAQLEQLLADMRTGVEFTEHLL. The Filamin repeat unit spans residues 394-497; the sequence is TKEVDPAKCV…VQGSPFTVMV (104 aa).

This sequence belongs to the TRIM/RBCC family. In terms of tissue distribution, expressed in skeletal muscle, brain, heart and pancreas.

Its subcellular location is the cytoplasm. The protein resides in the nucleus. It carries out the reaction S-ubiquitinyl-[E2 ubiquitin-conjugating enzyme]-L-cysteine + [acceptor protein]-L-lysine = [E2 ubiquitin-conjugating enzyme]-L-cysteine + N(6)-ubiquitinyl-[acceptor protein]-L-lysine.. Functionally, E3 ubiquitin-protein ligase that plays a role in the regulation of inflammatory response. Mechanistically, mediates the 'Lys-48'-linked polyubiquitination of TAB2, a regulatory protein of the kinase TAK1, leading to its degradation via the proteasomal pathway and inhibition of the TLR-mediated inflammatory immune response. May act as a transcriptional repressor in mitogen-activated protein kinase signaling pathway. This chain is E3 ubiquitin-protein ligase TRIM45 (TRIM45), found in Homo sapiens (Human).